A 391-amino-acid chain; its full sequence is Putative glutamate--cysteine ligase 2-2 (391 aa).

This sequence belongs to the glutamate--cysteine ligase type 2 family. YbdK subfamily.

The catalysed reaction is L-cysteine + L-glutamate + ATP = gamma-L-glutamyl-L-cysteine + ADP + phosphate + H(+). Its function is as follows. ATP-dependent carboxylate-amine ligase which exhibits weak glutamate--cysteine ligase activity. The polypeptide is Putative glutamate--cysteine ligase 2-2 (Saccharopolyspora erythraea (strain ATCC 11635 / DSM 40517 / JCM 4748 / NBRC 13426 / NCIMB 8594 / NRRL 2338)).